We begin with the raw amino-acid sequence, 337 residues long: ATP-dependent 6-phosphofructokinase (337 aa).

G11 lines the ATP pocket. Position 21–25 (21–25 (RAVVR)) interacts with ADP. Residues 72–73 (RY) and 102–105 (GDGS) each bind ATP. D103 provides a ligand contact to Mg(2+). 125–127 (TID) contacts substrate. D127 serves as the catalytic Proton acceptor. An ADP-binding site is contributed by R154. Residues R162 and 169-171 (MGR) contribute to the substrate site. ADP contacts are provided by residues 185–187 (GAD), K212, and 214–216 (KNH). Substrate contacts are provided by residues E223, R245, and 251–254 (HILR).

The protein belongs to the phosphofructokinase type A (PFKA) family. ATP-dependent PFK group I subfamily. Prokaryotic clade 'B1' sub-subfamily. Homotetramer. It depends on Mg(2+) as a cofactor.

It localises to the cytoplasm. The enzyme catalyses beta-D-fructose 6-phosphate + ATP = beta-D-fructose 1,6-bisphosphate + ADP + H(+). Its pathway is carbohydrate degradation; glycolysis; D-glyceraldehyde 3-phosphate and glycerone phosphate from D-glucose: step 3/4. With respect to regulation, allosterically activated by ADP and other diphosphonucleosides, and allosterically inhibited by phosphoenolpyruvate. Functionally, catalyzes the phosphorylation of D-fructose 6-phosphate to fructose 1,6-bisphosphate by ATP, the first committing step of glycolysis. The protein is ATP-dependent 6-phosphofructokinase of Streptococcus pyogenes serotype M28 (strain MGAS6180).